A 502-amino-acid chain; its full sequence is UPF0371 protein CLJ_B0384 (502 aa).

Belongs to the UPF0371 family.

The polypeptide is UPF0371 protein CLJ_B0384 (Clostridium botulinum (strain 657 / Type Ba4)).